Reading from the N-terminus, the 82-residue chain is MVFLLCFFLVADVSYGINKDCLLPMDVGRCRARFPRYYYNSSSRRCEKFNYGGCGGNANNFHTLEECEKVCGVRSRDSPKEN.

An N-terminal signal peptide occupies residues 1–16 (MVFLLCFFLVADVSYG). The region spanning 21-71 (CLLPMDVGRCRARFPRYYYNSSSRRCEKFNYGGCGGNANNFHTLEECEKVC) is the BPTI/Kunitz inhibitor domain. 3 disulfides stabilise this stretch: Cys-21-Cys-71, Cys-30-Cys-54, and Cys-46-Cys-67. Positions 76-82 (RDSPKEN) are excised as a propeptide.

It belongs to the venom Kunitz-type family. Sea anemone type 2 potassium channel toxin subfamily.

The protein localises to the secreted. It localises to the nematocyst. In terms of biological role, dual-function toxin that inhibits both the serine protease trypsin and voltage-gated potassium channels Kv1.2/KCNA2. The protein is U-actitoxin-Avd3l of Anemonia viridis (Snakelocks anemone).